We begin with the raw amino-acid sequence, 130 residues long: Iron-sulfur cluster insertion protein ErpA (130 aa).

The iron-sulfur cluster site is built by Cys46, Cys116, and Cys118.

Belongs to the HesB/IscA family. Homodimer. Requires iron-sulfur cluster as cofactor.

In terms of biological role, required for insertion of 4Fe-4S clusters for at least IspG. The polypeptide is Iron-sulfur cluster insertion protein ErpA (Legionella pneumophila (strain Paris)).